Here is a 555-residue protein sequence, read N- to C-terminus: Glutamine--tRNA ligase (555 aa).

Positions Pro-34–His-44 match the 'HIGH' region motif. ATP is bound by residues Glu-35–Asn-37 and His-41–Ser-47. Asp-67 and Tyr-212 together coordinate L-glutamine. ATP-binding positions include Thr-231, Arg-261–Leu-262, and Met-269–Lys-271. The 'KMSKS' region motif lies at Val-268–Arg-272. The interaction with tRNA stretch occupies residues Thr-317–Glu-324.

The protein belongs to the class-I aminoacyl-tRNA synthetase family. In terms of assembly, monomer.

Its subcellular location is the cytoplasm. The catalysed reaction is tRNA(Gln) + L-glutamine + ATP = L-glutaminyl-tRNA(Gln) + AMP + diphosphate. The protein is Glutamine--tRNA ligase of Salmonella newport (strain SL254).